A 374-amino-acid polypeptide reads, in one-letter code: MDTSSFETDLSLFKYDDLEALPDEYRELTPTARTERIEAARAELGDDVVVLGHNYQRREIVEHADFVGDSYQLSKEAANADADYVIFGGVTFMAESADIITDDSQSVILPSMEASCPMAGMAEALQVDAAWADITAAAPDETIIPITYMNSYADLKAFCAEQGGLVCTSSNAHRAFEWAFERGDKVLFLPDKHLGENTAHRLGMADATVEWDPWAAEGKTAEEVADADIVLWDGYCQVHERFTPEHVAEVRADHEDANVVVHPECRREVVEAADVVGSTATITETVADADPGETWAIGTEIHLANHLQRWHPEVNVVPLCGDACMDCNAMRQIDPNYLAWVLEELVEGRERNVIEVDSEEAELAQVGLDRMLEL.

His53 and Ser70 together coordinate iminosuccinate. Cys116 contributes to the [4Fe-4S] cluster binding site. Iminosuccinate is bound by residues 148–150 (YMN) and Ser169. Cys236 lines the [4Fe-4S] cluster pocket. Residues 262 to 264 (HPE) and Thr279 each bind iminosuccinate. Cys327 contributes to the [4Fe-4S] cluster binding site.

The protein belongs to the quinolinate synthase family. Type 3 subfamily. Requires [4Fe-4S] cluster as cofactor.

The protein localises to the cytoplasm. It carries out the reaction iminosuccinate + dihydroxyacetone phosphate = quinolinate + phosphate + 2 H2O + H(+). The protein operates within cofactor biosynthesis; NAD(+) biosynthesis; quinolinate from iminoaspartate: step 1/1. Functionally, catalyzes the condensation of iminoaspartate with dihydroxyacetone phosphate to form quinolinate. This chain is Quinolinate synthase, found in Halobacterium salinarum (strain ATCC 29341 / DSM 671 / R1).